A 188-amino-acid polypeptide reads, in one-letter code: Elongation factor P-like protein (188 aa).

This sequence belongs to the elongation factor P family.

This chain is Elongation factor P-like protein, found in Xanthomonas oryzae pv. oryzae (strain MAFF 311018).